The chain runs to 391 residues: Elongation factor Tu (391 aa).

The region spanning 10 to 201 (KPHVNIGTIG…AVDAYIPTPE (192 aa)) is the tr-type G domain. Positions 19 to 26 (GHVDHGKT) are G1. 19–26 (GHVDHGKT) contributes to the GTP binding site. T26 is a binding site for Mg(2+). A G2 region spans residues 55-59 (GITIS). The interval 76 to 79 (DCPG) is G3. GTP contacts are provided by residues 76–80 (DCPGH) and 131–134 (NKVD). The tract at residues 131–134 (NKVD) is G4. The G5 stretch occupies residues 169–171 (SAL).

This sequence belongs to the TRAFAC class translation factor GTPase superfamily. Classic translation factor GTPase family. EF-Tu/EF-1A subfamily. Monomer.

The protein localises to the cytoplasm. The catalysed reaction is GTP + H2O = GDP + phosphate + H(+). Its function is as follows. GTP hydrolase that promotes the GTP-dependent binding of aminoacyl-tRNA to the A-site of ribosomes during protein biosynthesis. The chain is Elongation factor Tu from Rhizobium johnstonii (strain DSM 114642 / LMG 32736 / 3841) (Rhizobium leguminosarum bv. viciae).